A 415-amino-acid polypeptide reads, in one-letter code: Type II methyltransferase M.DdeI (415 aa).

The 373-residue stretch at 1–373 folds into the SAM-dependent MTase C5-type domain; sequence MNIIDLFAGC…ERISWYFENI (373 aa). Residue Cys76 is part of the active site.

This sequence belongs to the class I-like SAM-binding methyltransferase superfamily. C5-methyltransferase family.

The catalysed reaction is a 2'-deoxycytidine in DNA + S-adenosyl-L-methionine = a 5-methyl-2'-deoxycytidine in DNA + S-adenosyl-L-homocysteine + H(+). Functionally, a methylase that recognizes the double-stranded sequence 5'-CTNAG-3', methylates C-1 on both strands, and protects the DNA from cleavage by the DdeI endonuclease. In Desulfomicrobium norvegicum (strain DSM 1741 / NCIMB 8310) (Desulfovibrio baculatus (strain Norway 4)), this protein is Type II methyltransferase M.DdeI (ddeIM).